Here is a 110-residue protein sequence, read N- to C-terminus: ATP-dependent Clp protease adapter protein ClpS (110 aa).

The protein belongs to the ClpS family. As to quaternary structure, binds to the N-terminal domain of the chaperone ClpA.

Involved in the modulation of the specificity of the ClpAP-mediated ATP-dependent protein degradation. The chain is ATP-dependent Clp protease adapter protein ClpS from Bartonella henselae (strain ATCC 49882 / DSM 28221 / CCUG 30454 / Houston 1) (Rochalimaea henselae).